The primary structure comprises 409 residues: uncharacterized protein (409 aa).

Helical transmembrane passes span 20–40, 283–303, 344–364, and 372–392; these read ILTMLGVIIGIAAIIAIVSML, FALLLGGIASISLLVGGIGVM, IGGILGVLAGFGIAKLLTVIF, and IPAVVGALIFSMAVGIIFGLL.

This sequence belongs to the ABC-4 integral membrane protein family.

It is found in the cell membrane. This is an uncharacterized protein from Bacillus subtilis (strain 168).